Reading from the N-terminus, the 468-residue chain is Glutamate--tRNA ligase 2 (468 aa).

A 'HIGH' region motif is present at residues 9-19; that stretch reads PSPTGFLHIGG. Positions 238 to 242 match the 'KMSKS' region motif; it reads KLSKR. Residue Lys-241 coordinates ATP.

Belongs to the class-I aminoacyl-tRNA synthetase family. Glutamate--tRNA ligase type 1 subfamily. Monomer.

The protein resides in the cytoplasm. It carries out the reaction tRNA(Glu) + L-glutamate + ATP = L-glutamyl-tRNA(Glu) + AMP + diphosphate. In terms of biological role, catalyzes the attachment of glutamate to tRNA(Glu) in a two-step reaction: glutamate is first activated by ATP to form Glu-AMP and then transferred to the acceptor end of tRNA(Glu). The chain is Glutamate--tRNA ligase 2 from Rhodospirillum rubrum (strain ATCC 11170 / ATH 1.1.1 / DSM 467 / LMG 4362 / NCIMB 8255 / S1).